A 332-amino-acid polypeptide reads, in one-letter code: Aspartate carbamoyltransferase catalytic subunit (332 aa).

Carbamoyl phosphate-binding residues include arginine 78 and threonine 79. Position 106 (lysine 106) interacts with L-aspartate. 3 residues coordinate carbamoyl phosphate: arginine 128, histidine 156, and glutamine 159. L-aspartate is bound by residues arginine 189 and arginine 243. Carbamoyl phosphate-binding residues include glycine 284 and proline 285.

It belongs to the aspartate/ornithine carbamoyltransferase superfamily. ATCase family. As to quaternary structure, heterododecamer (2C3:3R2) of six catalytic PyrB chains organized as two trimers (C3), and six regulatory PyrI chains organized as three dimers (R2).

It carries out the reaction carbamoyl phosphate + L-aspartate = N-carbamoyl-L-aspartate + phosphate + H(+). It functions in the pathway pyrimidine metabolism; UMP biosynthesis via de novo pathway; (S)-dihydroorotate from bicarbonate: step 2/3. Functionally, catalyzes the condensation of carbamoyl phosphate and aspartate to form carbamoyl aspartate and inorganic phosphate, the committed step in the de novo pyrimidine nucleotide biosynthesis pathway. The sequence is that of Aspartate carbamoyltransferase catalytic subunit from Caulobacter vibrioides (strain ATCC 19089 / CIP 103742 / CB 15) (Caulobacter crescentus).